Here is a 119-residue protein sequence, read N- to C-terminus: NADH-quinone oxidoreductase subunit A (119 aa).

3 helical membrane passes run 7 to 27 (YPVL…VSIG), 63 to 83 (LVAI…PWGV), and 88 to 108 (IGWP…LGFA).

The protein belongs to the complex I subunit 3 family. NDH-1 is composed of 14 different subunits. Subunits NuoA, H, J, K, L, M, N constitute the membrane sector of the complex.

It is found in the cell inner membrane. The enzyme catalyses a quinone + NADH + 5 H(+)(in) = a quinol + NAD(+) + 4 H(+)(out). Functionally, NDH-1 shuttles electrons from NADH, via FMN and iron-sulfur (Fe-S) centers, to quinones in the respiratory chain. The immediate electron acceptor for the enzyme in this species is believed to be ubiquinone. Couples the redox reaction to proton translocation (for every two electrons transferred, four hydrogen ions are translocated across the cytoplasmic membrane), and thus conserves the redox energy in a proton gradient. The polypeptide is NADH-quinone oxidoreductase subunit A (Burkholderia vietnamiensis (strain G4 / LMG 22486) (Burkholderia cepacia (strain R1808))).